A 55-amino-acid polypeptide reads, in one-letter code: ATP synthase F(0) complex subunit 8 (55 aa).

The helical transmembrane segment at 4–24 (LNPSPWFIILLFSWVIFMVIL) threads the bilayer.

The protein belongs to the ATPase protein 8 family. Component of the ATP synthase complex composed at least of ATP5F1A/subunit alpha, ATP5F1B/subunit beta, ATP5MC1/subunit c (homooctomer), MT-ATP6/subunit a, MT-ATP8/subunit 8, ATP5ME/subunit e, ATP5MF/subunit f, ATP5MG/subunit g, ATP5MK/subunit k, ATP5MJ/subunit j, ATP5F1C/subunit gamma, ATP5F1D/subunit delta, ATP5F1E/subunit epsilon, ATP5PF/subunit F6, ATP5PB/subunit b, ATP5PD/subunit d, ATP5PO/subunit OSCP. ATP synthase complex consists of a soluble F(1) head domain (subunits alpha(3) and beta(3)) - the catalytic core - and a membrane F(0) domain - the membrane proton channel (subunits c, a, 8, e, f, g, k and j). These two domains are linked by a central stalk (subunits gamma, delta, and epsilon) rotating inside the F1 region and a stationary peripheral stalk (subunits F6, b, d, and OSCP).

Its subcellular location is the mitochondrion membrane. Its function is as follows. Subunit 8, of the mitochondrial membrane ATP synthase complex (F(1)F(0) ATP synthase or Complex V) that produces ATP from ADP in the presence of a proton gradient across the membrane which is generated by electron transport complexes of the respiratory chain. ATP synthase complex consist of a soluble F(1) head domain - the catalytic core - and a membrane F(1) domain - the membrane proton channel. These two domains are linked by a central stalk rotating inside the F(1) region and a stationary peripheral stalk. During catalysis, ATP synthesis in the catalytic domain of F(1) is coupled via a rotary mechanism of the central stalk subunits to proton translocation. In vivo, can only synthesize ATP although its ATP hydrolase activity can be activated artificially in vitro. Part of the complex F(0) domain. The polypeptide is ATP synthase F(0) complex subunit 8 (Scyliorhinus canicula (Small-spotted catshark)).